A 235-amino-acid chain; its full sequence is UPF0758 protein CD630_11440 (235 aa).

The MPN domain occupies 113–235; it reads KIMNPWDIQR…YFSFKENMII (123 aa). Zn(2+) is bound by residues H184, H186, and D197. The JAMM motif motif lies at 184–197; sequence HNHPSGSVEPSRED.

This sequence belongs to the UPF0758 family.

This is UPF0758 protein CD630_11440 from Clostridioides difficile (strain 630) (Peptoclostridium difficile).